The primary structure comprises 259 residues: Phosphate import ATP-binding protein PstB (259 aa).

Residues 13 to 254 form the ABC transporter domain; sequence IQVRDLNFYY…PAQRQTEDYI (242 aa). 45-52 provides a ligand contact to ATP; that stretch reads GPSGCGKS.

It belongs to the ABC transporter superfamily. Phosphate importer (TC 3.A.1.7) family. The complex is composed of two ATP-binding proteins (PstB), two transmembrane proteins (PstC and PstA) and a solute-binding protein (PstS).

It localises to the cell inner membrane. It catalyses the reaction phosphate(out) + ATP + H2O = ADP + 2 phosphate(in) + H(+). Part of the ABC transporter complex PstSACB involved in phosphate import. Responsible for energy coupling to the transport system. The chain is Phosphate import ATP-binding protein PstB from Edwardsiella tarda.